Here is a 175-residue protein sequence, read N- to C-terminus: Small ribosomal subunit protein uS9 (175 aa).

The protein belongs to the universal ribosomal protein uS9 family.

The polypeptide is Small ribosomal subunit protein uS9 (Streptomyces griseus subsp. griseus (strain JCM 4626 / CBS 651.72 / NBRC 13350 / KCC S-0626 / ISP 5235)).